The primary structure comprises 123 residues: Protein Wnt-7b (123 aa).

Ser-1 is lipidated: O-palmitoleoyl serine; by PORCN. Residues 33 to 61 are disordered linker; that stretch reads VEVVRASRLRQPTFLKIKQIKSYQKPMET. The cysteines at positions 89 and 104 are disulfide-linked. An N-linked (GlcNAc...) asparagine glycan is attached at Asn-90.

Belongs to the Wnt family. In terms of processing, palmitoleoylation is required for efficient binding to frizzled receptors. Depalmitoleoylation leads to Wnt signaling pathway inhibition.

The protein resides in the secreted. It localises to the extracellular space. Its subcellular location is the extracellular matrix. Ligand for members of the frizzled family of seven transmembrane receptors that functions in the canonical Wnt/beta-catenin signaling pathway. Required for normal fusion of the chorion and the allantois during placenta development. Required for central nervous system (CNS) angiogenesis and blood-brain barrier regulation. This Anser caerulescens (Snow goose) protein is Protein Wnt-7b (WNT7B).